The sequence spans 218 residues: Small ribosomal subunit protein uS3c (218 aa).

The region spanning 39 to 120 (IRNFMNKELL…IITCKVVGVT (82 aa)) is the KH type-2 domain.

This sequence belongs to the universal ribosomal protein uS3 family. Part of the 30S ribosomal subunit.

It localises to the plastid. The protein resides in the chloroplast. In Euglena gracilis, this protein is Small ribosomal subunit protein uS3c (rps3).